Here is a 213-residue protein sequence, read N- to C-terminus: Imidazole glycerol phosphate synthase subunit HisH (213 aa).

Positions 3-213 (MIGVIDYGMG…VGIVTGRENG (211 aa)) constitute a Glutamine amidotransferase type-1 domain. C81 acts as the Nucleophile in catalysis. Active-site residues include H188 and E190.

In terms of assembly, heterodimer of HisH and HisF.

Its subcellular location is the cytoplasm. It catalyses the reaction 5-[(5-phospho-1-deoxy-D-ribulos-1-ylimino)methylamino]-1-(5-phospho-beta-D-ribosyl)imidazole-4-carboxamide + L-glutamine = D-erythro-1-(imidazol-4-yl)glycerol 3-phosphate + 5-amino-1-(5-phospho-beta-D-ribosyl)imidazole-4-carboxamide + L-glutamate + H(+). The enzyme catalyses L-glutamine + H2O = L-glutamate + NH4(+). Its pathway is amino-acid biosynthesis; L-histidine biosynthesis; L-histidine from 5-phospho-alpha-D-ribose 1-diphosphate: step 5/9. In terms of biological role, IGPS catalyzes the conversion of PRFAR and glutamine to IGP, AICAR and glutamate. The HisH subunit catalyzes the hydrolysis of glutamine to glutamate and ammonia as part of the synthesis of IGP and AICAR. The resulting ammonia molecule is channeled to the active site of HisF. This chain is Imidazole glycerol phosphate synthase subunit HisH, found in Geobacillus thermodenitrificans (strain NG80-2).